The chain runs to 22 residues: Phospholipase A2 (22 aa).

Belongs to the phospholipase A2 family. Requires Ca(2+) as cofactor.

The protein localises to the secreted. It catalyses the reaction a 1,2-diacyl-sn-glycero-3-phosphocholine + H2O = a 1-acyl-sn-glycero-3-phosphocholine + a fatty acid + H(+). Functionally, PA2 catalyzes the calcium-dependent hydrolysis of the 2-acyl groups in 3-sn-phosphoglycerides. This Struthio camelus (Common ostrich) protein is Phospholipase A2.